Consider the following 209-residue polypeptide: ATP-dependent Clp protease proteolytic subunit (209 aa).

Residue S106 is the Nucleophile of the active site. The active site involves H131.

It belongs to the peptidase S14 family. Fourteen ClpP subunits assemble into 2 heptameric rings which stack back to back to give a disk-like structure with a central cavity, resembling the structure of eukaryotic proteasomes.

The protein localises to the cytoplasm. The enzyme catalyses Hydrolysis of proteins to small peptides in the presence of ATP and magnesium. alpha-casein is the usual test substrate. In the absence of ATP, only oligopeptides shorter than five residues are hydrolyzed (such as succinyl-Leu-Tyr-|-NHMec, and Leu-Tyr-Leu-|-Tyr-Trp, in which cleavage of the -Tyr-|-Leu- and -Tyr-|-Trp bonds also occurs).. Cleaves peptides in various proteins in a process that requires ATP hydrolysis. Has a chymotrypsin-like activity. Plays a major role in the degradation of misfolded proteins. The chain is ATP-dependent Clp protease proteolytic subunit from Caulobacter vibrioides (strain ATCC 19089 / CIP 103742 / CB 15) (Caulobacter crescentus).